A 404-amino-acid chain; its full sequence is MNVLVINSGSSSIKYQLIDMTTEKALCSGLVERIGEGMGKLTHKIKPDTDAEEKIVLEQAFANHVEGMKKVVDLITDADKGVIADKGEIYAVGHRVLLGGEEIKQSVKIDEWAKGIIRDYIPLGPLHNPANLAGIEVAEELFPHAPSVGVFDTEFHQTMPKKAYLYPLPYDLYKTLRIRRYGFHGTSHRYITKKTAEFLGKPLDELNIITCHLGNGCSMAAVKNGRCVDTTMGITPLEGLMMGTRCGDIDPALVPFLMEKKGWSGAEIDTVMNKQSGLKGICGMNDMRDIHAAREKGDEMAELAFQMFVYRIRKYIGSFAVVVGKLDAIVFTAGIGENDDLVRAAVCKDMDILGIDIDEAVNAKRSGQARHIGKPGQRVPVLVVPTNEELEIAQTTVAVLNGKN.

Asn-7 serves as a coordination point for Mg(2+). Lys-14 provides a ligand contact to ATP. Arg-95 is a binding site for substrate. Catalysis depends on Asp-152, which acts as the Proton donor/acceptor. Residues 212-216 (HLGNG), 286-288 (DMR), and 334-338 (GIGEN) each bind ATP. Glu-388 contacts Mg(2+).

This sequence belongs to the acetokinase family. Homodimer. Mg(2+) is required as a cofactor. Requires Mn(2+) as cofactor.

It localises to the cytoplasm. The enzyme catalyses acetate + ATP = acetyl phosphate + ADP. The protein operates within metabolic intermediate biosynthesis; acetyl-CoA biosynthesis; acetyl-CoA from acetate: step 1/2. Functionally, catalyzes the formation of acetyl phosphate from acetate and ATP. Can also catalyze the reverse reaction. The chain is Acetate kinase from Nitratidesulfovibrio vulgaris (strain DSM 19637 / Miyazaki F) (Desulfovibrio vulgaris).